The following is a 203-amino-acid chain: Holliday junction branch migration complex subunit RuvA (203 aa).

A domain I region spans residues 1 to 64; sequence MIGRLRGYIL…EDAQLLYGFN (64 aa). A domain II region spans residues 65 to 142; that stretch reads DKQERALFRE…KGLNGDLFNN (78 aa). Positions 143–154 are flexible linker; the sequence is SSEITLPTAAQA. The domain III stretch occupies residues 155–203; sequence AELDAEAEAASALVALGYKPQEASRMVSKIAKPGADCETLIRDALRAAL.

The protein belongs to the RuvA family. As to quaternary structure, homotetramer. Forms an RuvA(8)-RuvB(12)-Holliday junction (HJ) complex. HJ DNA is sandwiched between 2 RuvA tetramers; dsDNA enters through RuvA and exits via RuvB. An RuvB hexamer assembles on each DNA strand where it exits the tetramer. Each RuvB hexamer is contacted by two RuvA subunits (via domain III) on 2 adjacent RuvB subunits; this complex drives branch migration. In the full resolvosome a probable DNA-RuvA(4)-RuvB(12)-RuvC(2) complex forms which resolves the HJ.

The protein resides in the cytoplasm. Functionally, the RuvA-RuvB-RuvC complex processes Holliday junction (HJ) DNA during genetic recombination and DNA repair, while the RuvA-RuvB complex plays an important role in the rescue of blocked DNA replication forks via replication fork reversal (RFR). RuvA specifically binds to HJ cruciform DNA, conferring on it an open structure. The RuvB hexamer acts as an ATP-dependent pump, pulling dsDNA into and through the RuvAB complex. HJ branch migration allows RuvC to scan DNA until it finds its consensus sequence, where it cleaves and resolves the cruciform DNA. The sequence is that of Holliday junction branch migration complex subunit RuvA from Serratia proteamaculans (strain 568).